Reading from the N-terminus, the 294-residue chain is 33 kDa chaperonin (294 aa).

2 cysteine pairs are disulfide-bonded: cysteine 238/cysteine 240 and cysteine 271/cysteine 274.

This sequence belongs to the HSP33 family. Post-translationally, under oxidizing conditions two disulfide bonds are formed involving the reactive cysteines. Under reducing conditions zinc is bound to the reactive cysteines and the protein is inactive.

It localises to the cytoplasm. Its function is as follows. Redox regulated molecular chaperone. Protects both thermally unfolding and oxidatively damaged proteins from irreversible aggregation. Plays an important role in the bacterial defense system toward oxidative stress. In Staphylococcus haemolyticus (strain JCSC1435), this protein is 33 kDa chaperonin.